A 560-amino-acid chain; its full sequence is Diphtheria toxin (560 aa).

The signal sequence occupies residues 1-25 (MSRKLFASILIGALLGIGAPPSAHA). The NAD(+) site is built by His-46 and Tyr-90. Residue Glu-173 is part of the active site. 2 disulfides stabilise this stretch: Cys-211-Cys-226 and Cys-486-Cys-496.

Homodimer.

It carries out the reaction diphthamide-[translation elongation factor 2] + NAD(+) = N-(ADP-D-ribosyl)diphthamide-[translation elongation factor 2] + nicotinamide + H(+). Its function is as follows. Diphtheria toxin, produced by a phage infecting Corynebacterium diphtheriae, is a proenzyme that, after activation, catalyzes the covalent attachment of the ADP ribose moiety of NAD to elongation factor 2. Fragment A is responsible for enzymatic ADP-ribosylation of elongation factor 2, while fragment B is responsible for binding of toxin to cell receptors and entry of fragment A. This is Diphtheria toxin from Corynephage omega.